The primary structure comprises 262 residues: Nickel import ATP-binding protein NikD (262 aa).

The region spanning 6-249 is the ABC transporter domain; sequence LAIEGLTATT…PGHEVTRMLV (244 aa). ATP is bound at residue 42 to 49; it reads GASGSGKS.

It belongs to the ABC transporter superfamily. Nickel importer (TC 3.A.1.5.3) family. The complex is composed of two ATP-binding proteins (NikD and NikE), two transmembrane proteins (NikB and NikC) and a solute-binding protein (NikA).

The protein resides in the cell inner membrane. The catalysed reaction is Ni(2+)(out) + ATP + H2O = Ni(2+)(in) + ADP + phosphate + H(+). Its function is as follows. Part of the ABC transporter complex NikABCDE involved in nickel import. Responsible for energy coupling to the transport system. The chain is Nickel import ATP-binding protein NikD from Brucella abortus biovar 1 (strain 9-941).